The sequence spans 75 residues: MKQDIHPKYKEVTVNCANCGNSFVTRSTRPTIKVDICNNCHPFYTGKQTLVDTAGRVERFNKRFAKSTAAQASAQ.

The protein belongs to the bacterial ribosomal protein bL31 family. Type A subfamily. In terms of assembly, part of the 50S ribosomal subunit.

Binds the 23S rRNA. This is Large ribosomal subunit protein bL31 from Pelodictyon phaeoclathratiforme (strain DSM 5477 / BU-1).